A 544-amino-acid chain; its full sequence is NADH-quinone oxidoreductase subunit C/D (544 aa).

Positions 1-138 are NADH dehydrogenase I subunit C; it reads MLNCDMLIDS…KGQICTETED (138 aa). The segment at 161 to 544 is NADH dehydrogenase I subunit D; sequence MLLNVGPSHP…MNFIAGEFDR (384 aa).

The protein in the N-terminal section; belongs to the complex I 30 kDa subunit family. In the C-terminal section; belongs to the complex I 49 kDa subunit family. As to quaternary structure, NDH-1 is composed of 13 different subunits. Subunits NuoB, CD, E, F, and G constitute the peripheral sector of the complex.

The protein resides in the cell inner membrane. It carries out the reaction a quinone + NADH + 5 H(+)(in) = a quinol + NAD(+) + 4 H(+)(out). In terms of biological role, NDH-1 shuttles electrons from NADH, via FMN and iron-sulfur (Fe-S) centers, to quinones in the respiratory chain. The immediate electron acceptor for the enzyme in this species is believed to be ubiquinone. Couples the redox reaction to proton translocation (for every two electrons transferred, four hydrogen ions are translocated across the cytoplasmic membrane), and thus conserves the redox energy in a proton gradient. This Aliarcobacter butzleri (strain RM4018) (Arcobacter butzleri) protein is NADH-quinone oxidoreductase subunit C/D.